Consider the following 1381-residue polypeptide: DNA-directed RNA polymerase subunit beta'' (1381 aa).

The Zn(2+) site is built by C224, C296, C303, and C306.

Belongs to the RNA polymerase beta' chain family. RpoC2 subfamily. As to quaternary structure, in plastids the minimal PEP RNA polymerase catalytic core is composed of four subunits: alpha, beta, beta', and beta''. When a (nuclear-encoded) sigma factor is associated with the core the holoenzyme is formed, which can initiate transcription. Requires Zn(2+) as cofactor.

It is found in the plastid. It localises to the chloroplast. The enzyme catalyses RNA(n) + a ribonucleoside 5'-triphosphate = RNA(n+1) + diphosphate. Functionally, DNA-dependent RNA polymerase catalyzes the transcription of DNA into RNA using the four ribonucleoside triphosphates as substrates. The chain is DNA-directed RNA polymerase subunit beta'' from Drimys granadensis.